The following is a 544-amino-acid chain: Aspartokinase (544 aa).

Positions 463-535 constitute an ACT domain; the sequence is LVGKQMVNFI…SAIGDSSAVD (73 aa).

The protein belongs to the aspartokinase family.

The enzyme catalyses L-aspartate + ATP = 4-phospho-L-aspartate + ADP. It functions in the pathway amino-acid biosynthesis; L-methionine biosynthesis via de novo pathway; L-homoserine from L-aspartate: step 1/3. It participates in amino-acid biosynthesis; L-threonine biosynthesis; L-threonine from L-aspartate: step 1/5. Its function is as follows. Phosphorylates aspartate, the first step in the biosynthesis of amino acids that derive from aspartate (the aspartate family of amino acids), including methioinine and threonine, the latter of which is a precursor to isoleucine. In Candida albicans (strain SC5314 / ATCC MYA-2876) (Yeast), this protein is Aspartokinase.